Consider the following 98-residue polypeptide: NADH-ubiquinone oxidoreductase chain 4L (98 aa).

Helical transmembrane passes span 1 to 21, 29 to 49, and 61 to 81; these read MTLI…GLLM, ALLC…LTIL, and IILL…LVMV.

Belongs to the complex I subunit 4L family. As to quaternary structure, core subunit of respiratory chain NADH dehydrogenase (Complex I) which is composed of 45 different subunits.

Its subcellular location is the mitochondrion inner membrane. The catalysed reaction is a ubiquinone + NADH + 5 H(+)(in) = a ubiquinol + NAD(+) + 4 H(+)(out). Its function is as follows. Core subunit of the mitochondrial membrane respiratory chain NADH dehydrogenase (Complex I) which catalyzes electron transfer from NADH through the respiratory chain, using ubiquinone as an electron acceptor. Part of the enzyme membrane arm which is embedded in the lipid bilayer and involved in proton translocation. This is NADH-ubiquinone oxidoreductase chain 4L (MT-ND4L) from Balaenoptera bonaerensis (Antarctic minke whale).